We begin with the raw amino-acid sequence, 391 residues long: Dual-specificity RNA methyltransferase RlmN (391 aa).

The Proton acceptor role is filled by E115. The Radical SAM core domain occupies 121 to 363 (EENRGTLCIS…SPIRTPRGED (243 aa)). C128 and C368 are oxidised to a cystine. [4Fe-4S] cluster is bound by residues C135, C139, and C142. S-adenosyl-L-methionine-binding positions include 194–195 (GE), S226, 248–250 (SFH), and N325. C368 serves as the catalytic S-methylcysteine intermediate.

This sequence belongs to the radical SAM superfamily. RlmN family. [4Fe-4S] cluster serves as cofactor.

It localises to the cytoplasm. It carries out the reaction adenosine(2503) in 23S rRNA + 2 reduced [2Fe-2S]-[ferredoxin] + 2 S-adenosyl-L-methionine = 2-methyladenosine(2503) in 23S rRNA + 5'-deoxyadenosine + L-methionine + 2 oxidized [2Fe-2S]-[ferredoxin] + S-adenosyl-L-homocysteine. The catalysed reaction is adenosine(37) in tRNA + 2 reduced [2Fe-2S]-[ferredoxin] + 2 S-adenosyl-L-methionine = 2-methyladenosine(37) in tRNA + 5'-deoxyadenosine + L-methionine + 2 oxidized [2Fe-2S]-[ferredoxin] + S-adenosyl-L-homocysteine. Its function is as follows. Specifically methylates position 2 of adenine 2503 in 23S rRNA and position 2 of adenine 37 in tRNAs. m2A2503 modification seems to play a crucial role in the proofreading step occurring at the peptidyl transferase center and thus would serve to optimize ribosomal fidelity. This is Dual-specificity RNA methyltransferase RlmN from Paracoccus denitrificans (strain Pd 1222).